The following is a 427-amino-acid chain: 3-isopropylmalate dehydratase large subunit (427 aa).

Residues Cys-308, Cys-368, and Cys-371 each contribute to the [4Fe-4S] cluster site.

This sequence belongs to the aconitase/IPM isomerase family. LeuC type 2 subfamily. Heterodimer of LeuC and LeuD. Requires [4Fe-4S] cluster as cofactor.

It carries out the reaction (2R,3S)-3-isopropylmalate = (2S)-2-isopropylmalate. Its pathway is amino-acid biosynthesis; L-leucine biosynthesis; L-leucine from 3-methyl-2-oxobutanoate: step 2/4. Its function is as follows. Catalyzes the isomerization between 2-isopropylmalate and 3-isopropylmalate, via the formation of 2-isopropylmaleate. This Geobacter metallireducens (strain ATCC 53774 / DSM 7210 / GS-15) protein is 3-isopropylmalate dehydratase large subunit.